The chain runs to 445 residues: von Willebrand factor A domain-containing protein 1 (445 aa).

The signal sequence occupies residues 1 to 22 (MLPWTALGLALSLRLALARSGA). A VWFA domain is found at 34–213 (DLMFLLDSSA…ELRGSILDAM (180 aa)). Residues Ser74 and Ser80 each carry the phosphoserine; by FAM20C modification. Tyr83 is modified (phosphotyrosine). Ser93 is subject to Phosphoserine; by FAM20C. Positions 214–304 (RPQQLHATEI…QILRVRTRPG (91 aa)) constitute a Fibronectin type-III 1 domain. N-linked (GlcNAc...) asparagine glycosylation is present at Asn264. Disordered regions lie at residues 302 to 325 (RPGEAGPGASGPESGAGPAPTQLA) and 411 to 445 (RESALSAKACTPDGPRPRPRPVPRAPTPGTASREP). A compositionally biased stretch (low complexity) spans 311–325 (SGPESGAGPAPTQLA). A Fibronectin type-III 2 domain is found at 334-427 (GPERIVISHA…KACTPDGPRP (94 aa)).

Homodimer or homomultimer; disulfide-linked. Interacts with HSPG2. N-glycosylated.

The protein localises to the secreted. Its subcellular location is the extracellular space. It localises to the extracellular matrix. The protein resides in the basement membrane. In terms of biological role, promotes matrix assembly. Involved in the organization of skeletal muscles and in the formation of neuromuscular junctions. This is von Willebrand factor A domain-containing protein 1 from Homo sapiens (Human).